The sequence spans 329 residues: Ribonucleoside-diphosphate reductase subunit beta (329 aa).

Residues aspartate 66, glutamate 97, and histidine 101 each coordinate Fe cation. Tyrosine 105 is a catalytic residue. Glutamate 164, glutamate 198, and histidine 201 together coordinate Fe cation.

It belongs to the ribonucleoside diphosphate reductase small chain family. Tetramer of two alpha and two beta subunits. Fe cation serves as cofactor.

It catalyses the reaction a 2'-deoxyribonucleoside 5'-diphosphate + [thioredoxin]-disulfide + H2O = a ribonucleoside 5'-diphosphate + [thioredoxin]-dithiol. Provides the precursors necessary for DNA synthesis. Catalyzes the biosynthesis of deoxyribonucleotides from the corresponding ribonucleotides. This Bacillus pumilus (Bacillus mesentericus) protein is Ribonucleoside-diphosphate reductase subunit beta (bnrdF).